We begin with the raw amino-acid sequence, 294 residues long: tRNA-cytidine(32) 2-sulfurtransferase (294 aa).

The PP-loop motif motif lies at 58-63; sequence SGGKDS. [4Fe-4S] cluster contacts are provided by Cys133, Cys136, and Cys224.

This sequence belongs to the TtcA family. In terms of assembly, homodimer. It depends on Mg(2+) as a cofactor. [4Fe-4S] cluster serves as cofactor.

The protein localises to the cytoplasm. It carries out the reaction cytidine(32) in tRNA + S-sulfanyl-L-cysteinyl-[cysteine desulfurase] + AH2 + ATP = 2-thiocytidine(32) in tRNA + L-cysteinyl-[cysteine desulfurase] + A + AMP + diphosphate + H(+). The protein operates within tRNA modification. Its function is as follows. Catalyzes the ATP-dependent 2-thiolation of cytidine in position 32 of tRNA, to form 2-thiocytidine (s(2)C32). The sulfur atoms are provided by the cysteine/cysteine desulfurase (IscS) system. The polypeptide is tRNA-cytidine(32) 2-sulfurtransferase (Ruegeria pomeroyi (strain ATCC 700808 / DSM 15171 / DSS-3) (Silicibacter pomeroyi)).